A 41-amino-acid chain; its full sequence is Photosystem II reaction center protein L (41 aa).

A helical membrane pass occupies residues 20–40; it reads SLYLGLLLVFVVGLLFSSYFL.

It belongs to the PsbL family. As to quaternary structure, PSII is composed of 1 copy each of membrane proteins PsbA, PsbB, PsbC, PsbD, PsbE, PsbF, PsbH, PsbI, PsbJ, PsbK, PsbL, PsbM, PsbT, PsbX, PsbY, PsbZ, Psb30/Ycf12, peripheral proteins PsbO, CyanoQ (PsbQ), PsbU, PsbV and a large number of cofactors. It forms dimeric complexes.

Its subcellular location is the cellular thylakoid membrane. Functionally, one of the components of the core complex of photosystem II (PSII). PSII is a light-driven water:plastoquinone oxidoreductase that uses light energy to abstract electrons from H(2)O, generating O(2) and a proton gradient subsequently used for ATP formation. It consists of a core antenna complex that captures photons, and an electron transfer chain that converts photonic excitation into a charge separation. This subunit is found at the monomer-monomer interface and is required for correct PSII assembly and/or dimerization. The chain is Photosystem II reaction center protein L from Synechococcus sp. (strain JA-2-3B'a(2-13)) (Cyanobacteria bacterium Yellowstone B-Prime).